The sequence spans 214 residues: Quinolone resistance pentapeptide repeat protein QnrB96 (214 aa).

Pentapeptide repeat domains are found at residues serine 23–asparagine 103 and isoleucine 116–valine 189.

Belongs to the pentapeptide repeat protein family.

Its function is as follows. Confers reduced sensitivity to the fluoroquinolone antibiotic ciprofloxacin (five-fold increase in minimum inhibitory concentration) when expressed in E.coli. In Scandinavium goeteborgense, this protein is Quinolone resistance pentapeptide repeat protein QnrB96.